The primary structure comprises 567 residues: Oxygen-dependent choline dehydrogenase (567 aa).

6–35 (DYIIVGAGSAGNTLATRLTEDEGVTVLLLE) is an FAD binding site. The interval 182–203 (QQEGFGPMDRTVTPKGRRASTA) is disordered. His475 (proton acceptor) is an active-site residue.

Belongs to the GMC oxidoreductase family. The cofactor is FAD.

It carries out the reaction choline + A = betaine aldehyde + AH2. It catalyses the reaction betaine aldehyde + NAD(+) + H2O = glycine betaine + NADH + 2 H(+). It participates in amine and polyamine biosynthesis; betaine biosynthesis via choline pathway; betaine aldehyde from choline (cytochrome c reductase route): step 1/1. Involved in the biosynthesis of the osmoprotectant glycine betaine. Catalyzes the oxidation of choline to betaine aldehyde and betaine aldehyde to glycine betaine at the same rate. In Pseudomonas fluorescens (strain ATCC BAA-477 / NRRL B-23932 / Pf-5), this protein is Oxygen-dependent choline dehydrogenase.